Reading from the N-terminus, the 90-residue chain is DNA-directed RNA polymerase subunit omega (90 aa).

Residues 69-90 are disordered; the sequence is RQEQQEQEAAELAAVSSIAHTR.

It belongs to the RNA polymerase subunit omega family. The RNAP catalytic core consists of 2 alpha, 1 beta, 1 beta' and 1 omega subunit. When a sigma factor is associated with the core the holoenzyme is formed, which can initiate transcription.

It carries out the reaction RNA(n) + a ribonucleoside 5'-triphosphate = RNA(n+1) + diphosphate. Functionally, promotes RNA polymerase assembly. Latches the N- and C-terminal regions of the beta' subunit thereby facilitating its interaction with the beta and alpha subunits. In Vibrio atlanticus (strain LGP32) (Vibrio splendidus (strain Mel32)), this protein is DNA-directed RNA polymerase subunit omega.